The following is a 380-amino-acid chain: UDP-N-acetylglucosamine 2-epimerase (380 aa).

This sequence belongs to the UDP-N-acetylglucosamine 2-epimerase family.

The protein resides in the cytoplasm. It carries out the reaction UDP-N-acetyl-alpha-D-glucosamine = UDP-N-acetyl-alpha-D-mannosamine. It participates in cell wall biogenesis; poly(glycerol phosphate) teichoic acid biosynthesis. Functionally, catalyzes the conversion of UDP-N-acetylglucosamine into UDP-N-acetylmannosamine, a precursor of the teichoic acid linkage unit. The polypeptide is UDP-N-acetylglucosamine 2-epimerase (mnaA) (Bacillus subtilis (strain 168)).